The primary structure comprises 684 residues: Glycine--tRNA ligase beta subunit (684 aa).

The protein belongs to the class-II aminoacyl-tRNA synthetase family. As to quaternary structure, tetramer of two alpha and two beta subunits.

Its subcellular location is the cytoplasm. The catalysed reaction is tRNA(Gly) + glycine + ATP = glycyl-tRNA(Gly) + AMP + diphosphate. The chain is Glycine--tRNA ligase beta subunit from Pseudomonas fluorescens (strain Pf0-1).